Reading from the N-terminus, the 358-residue chain is Spermatogenesis-associated protein 22 (358 aa).

Polar residues-rich tracts occupy residues 1 to 12 (MKRNLNESSARS), 30 to 51 (QPLT…DSYG), 81 to 121 (PASA…TSLR), and 150 to 159 (QQQKQFQTPE). Disordered stretches follow at residues 1 to 51 (MKRN…DSYG), 81 to 122 (PASA…SLRT), and 150 to 172 (QQQK…AEVP).

In terms of assembly, component of a multiprotein complex with MEIOB and RPA2. Interacts with MEIOB. Interacts with the complex BRME1:HSF2BP:BRCA2. In terms of tissue distribution, specifically expressed in gonadal germ cells, when male and female germ cells progress through prophase of meiosis I.

Its subcellular location is the chromosome. Meiosis-specific protein required for homologous recombination in meiosis I. The sequence is that of Spermatogenesis-associated protein 22 from Mus musculus (Mouse).